Consider the following 238-residue polypeptide: 7-cyano-7-deazaguanine synthase (238 aa).

Residue 12–22 (FSGGQDSTTCL) participates in ATP binding. Zn(2+)-binding residues include cysteine 191, cysteine 200, cysteine 203, and cysteine 206.

The protein belongs to the QueC family. Zn(2+) serves as cofactor.

The catalysed reaction is 7-carboxy-7-deazaguanine + NH4(+) + ATP = 7-cyano-7-deazaguanine + ADP + phosphate + H2O + H(+). It functions in the pathway purine metabolism; 7-cyano-7-deazaguanine biosynthesis. In terms of biological role, catalyzes the ATP-dependent conversion of 7-carboxy-7-deazaguanine (CDG) to 7-cyano-7-deazaguanine (preQ(0)). The chain is 7-cyano-7-deazaguanine synthase from Shewanella oneidensis (strain ATCC 700550 / JCM 31522 / CIP 106686 / LMG 19005 / NCIMB 14063 / MR-1).